A 420-amino-acid polypeptide reads, in one-letter code: Enolase (420 aa).

A (2R)-2-phosphoglycerate-binding site is contributed by Gln162. The active-site Proton donor is Glu206. Mg(2+) contacts are provided by Asp241, Glu282, and Asp308. Residues Lys333, Arg362, Ser363, and Lys384 each coordinate (2R)-2-phosphoglycerate. Lys333 acts as the Proton acceptor in catalysis.

Belongs to the enolase family. Requires Mg(2+) as cofactor.

The protein resides in the cytoplasm. The protein localises to the secreted. It localises to the cell surface. The catalysed reaction is (2R)-2-phosphoglycerate = phosphoenolpyruvate + H2O. Its pathway is carbohydrate degradation; glycolysis; pyruvate from D-glyceraldehyde 3-phosphate: step 4/5. Catalyzes the reversible conversion of 2-phosphoglycerate (2-PG) into phosphoenolpyruvate (PEP). It is essential for the degradation of carbohydrates via glycolysis. This chain is Enolase, found in Methanothrix thermoacetophila (strain DSM 6194 / JCM 14653 / NBRC 101360 / PT) (Methanosaeta thermophila).